A 380-amino-acid chain; its full sequence is Cytochrome b (380 aa).

4 helical membrane-spanning segments follow: residues 34-54 (FGSL…LLAM), 78-99 (WLIR…YLHI), 114-134 (WNTG…GYVL), and 179-199 (FFAL…IHLT). Residues His84 and His98 each coordinate heme b. His183 and His197 together coordinate heme b. His202 provides a ligand contact to a ubiquinone. Transmembrane regions (helical) follow at residues 227-247 (TKDT…ALFS), 289-309 (LGGV…PLLH), 321-341 (LSQL…WIGS), and 348-368 (FIII…ILFP).

Belongs to the cytochrome b family. In terms of assembly, the cytochrome bc1 complex contains 11 subunits: 3 respiratory subunits (MT-CYB, CYC1 and UQCRFS1), 2 core proteins (UQCRC1 and UQCRC2) and 6 low-molecular weight proteins (UQCRH/QCR6, UQCRB/QCR7, UQCRQ/QCR8, UQCR10/QCR9, UQCR11/QCR10 and a cleavage product of UQCRFS1). This cytochrome bc1 complex then forms a dimer. Heme b is required as a cofactor.

It is found in the mitochondrion inner membrane. Functionally, component of the ubiquinol-cytochrome c reductase complex (complex III or cytochrome b-c1 complex) that is part of the mitochondrial respiratory chain. The b-c1 complex mediates electron transfer from ubiquinol to cytochrome c. Contributes to the generation of a proton gradient across the mitochondrial membrane that is then used for ATP synthesis. This chain is Cytochrome b (MT-CYB), found in Aptenodytes patagonicus (King penguin).